The chain runs to 320 residues: Mitochondrial thiamine pyrophosphate carrier (320 aa).

Solcar repeat units lie at residues 13-106 (NTKF…LTEL), 116-202 (REFS…LKHL), and 214-309 (NENL…FCNV). A helical transmembrane segment spans residues 19–39 (AVAGSVSGLVTRALISPFDVI). Position 51 is a phosphoserine (S51). The next 4 membrane-spanning stretches (helical) occupy residues 87–107 (ILSI…TELV), 122–142 (FVCG…VDVL), 173–193 (VFYK…GLQF), and 220–240 (LLCG…LDLF). Positions 241–246 (KKRLQV) match the Substrate recognition motif. A helical transmembrane segment spans residues 293 to 313 (ALSTGFMFFWYEFFCNVFHCM).

Belongs to the mitochondrial carrier (TC 2.A.29) family.

It localises to the mitochondrion membrane. It carries out the reaction thiamine phosphate(out) + thiamine diphosphate(in) = thiamine phosphate(in) + thiamine diphosphate(out). Mitochondrial transporter mediating uptake of thiamine diphosphate into mitochondria. It is not clear if the antiporter activity is affected by the membrane potential or by the proton electrochemical gradient. The polypeptide is Mitochondrial thiamine pyrophosphate carrier (SLC25A19) (Pongo abelii (Sumatran orangutan)).